A 299-amino-acid polypeptide reads, in one-letter code: tRNA pseudouridine synthase B (299 aa).

Catalysis depends on aspartate 38, which acts as the Nucleophile.

Belongs to the pseudouridine synthase TruB family. Type 1 subfamily.

It carries out the reaction uridine(55) in tRNA = pseudouridine(55) in tRNA. Functionally, responsible for synthesis of pseudouridine from uracil-55 in the psi GC loop of transfer RNAs. This chain is tRNA pseudouridine synthase B, found in Pediococcus pentosaceus (strain ATCC 25745 / CCUG 21536 / LMG 10740 / 183-1w).